The sequence spans 354 residues: Holliday junction branch migration complex subunit RuvB (354 aa).

The large ATPase domain (RuvB-L) stretch occupies residues 1 to 183 (MTGDNLVSAY…FGFVAHLDFY (183 aa)). ATP is bound by residues Arg23, Gly64, Lys67, Thr68, Ser69, 130–132 (EDF), Arg173, Tyr183, and Arg220. Mg(2+) is bound at residue Thr68. The tract at residues 184–254 (SPADLETLLN…TAQAALTVYD (71 aa)) is small ATPAse domain (RuvB-S). Residues 257–354 (ALGLDRLDRA…DLFSVEPDQP (98 aa)) are head domain (RuvB-H). Positions 312 and 317 each coordinate DNA.

This sequence belongs to the RuvB family. Homohexamer. Forms an RuvA(8)-RuvB(12)-Holliday junction (HJ) complex. HJ DNA is sandwiched between 2 RuvA tetramers; dsDNA enters through RuvA and exits via RuvB. An RuvB hexamer assembles on each DNA strand where it exits the tetramer. Each RuvB hexamer is contacted by two RuvA subunits (via domain III) on 2 adjacent RuvB subunits; this complex drives branch migration. In the full resolvosome a probable DNA-RuvA(4)-RuvB(12)-RuvC(2) complex forms which resolves the HJ.

The protein resides in the cytoplasm. It catalyses the reaction ATP + H2O = ADP + phosphate + H(+). In terms of biological role, the RuvA-RuvB-RuvC complex processes Holliday junction (HJ) DNA during genetic recombination and DNA repair, while the RuvA-RuvB complex plays an important role in the rescue of blocked DNA replication forks via replication fork reversal (RFR). RuvA specifically binds to HJ cruciform DNA, conferring on it an open structure. The RuvB hexamer acts as an ATP-dependent pump, pulling dsDNA into and through the RuvAB complex. RuvB forms 2 homohexamers on either side of HJ DNA bound by 1 or 2 RuvA tetramers; 4 subunits per hexamer contact DNA at a time. Coordinated motions by a converter formed by DNA-disengaged RuvB subunits stimulates ATP hydrolysis and nucleotide exchange. Immobilization of the converter enables RuvB to convert the ATP-contained energy into a lever motion, pulling 2 nucleotides of DNA out of the RuvA tetramer per ATP hydrolyzed, thus driving DNA branch migration. The RuvB motors rotate together with the DNA substrate, which together with the progressing nucleotide cycle form the mechanistic basis for DNA recombination by continuous HJ branch migration. Branch migration allows RuvC to scan DNA until it finds its consensus sequence, where it cleaves and resolves cruciform DNA. In Salinispora tropica (strain ATCC BAA-916 / DSM 44818 / JCM 13857 / NBRC 105044 / CNB-440), this protein is Holliday junction branch migration complex subunit RuvB.